A 338-amino-acid chain; its full sequence is Protein REG2 (338 aa).

Residues 1–21 form a disordered region; sequence MTLSNCDSLDNLFQDPPEEEE.

Regulatory subunit, binds to type-1 protein phosphatase. Functions with HEX2/REG1 and SNF1 protein kinase to regulate growth. Might regulate SNF1 directly or indirectly. The chain is Protein REG2 (REG2) from Saccharomyces cerevisiae (strain ATCC 204508 / S288c) (Baker's yeast).